The primary structure comprises 184 residues: Ribosome-recycling factor (184 aa).

This sequence belongs to the RRF family.

Its subcellular location is the cytoplasm. In terms of biological role, responsible for the release of ribosomes from messenger RNA at the termination of protein biosynthesis. May increase the efficiency of translation by recycling ribosomes from one round of translation to another. This Borrelia recurrentis (strain A1) protein is Ribosome-recycling factor.